The chain runs to 1241 residues: ATP-dependent helicase/nuclease subunit A (1241 aa).

The 474-residue stretch at 12–485 (SQWTDDQWKA…IDLAKNFRSR (474 aa)) folds into the UvrD-like helicase ATP-binding domain. Position 33-40 (33-40 (AAAGSGKT)) interacts with ATP. One can recognise a UvrD-like helicase C-terminal domain in the interval 505 to 805 (GEIDYDADAE…RIMTIHKSKG (301 aa)).

The protein belongs to the helicase family. AddA subfamily. Heterodimer of AddA and AddB/RexB. It depends on Mg(2+) as a cofactor.

It catalyses the reaction Couples ATP hydrolysis with the unwinding of duplex DNA by translocating in the 3'-5' direction.. The catalysed reaction is ATP + H2O = ADP + phosphate + H(+). Functionally, the heterodimer acts as both an ATP-dependent DNA helicase and an ATP-dependent, dual-direction single-stranded exonuclease. Recognizes the chi site generating a DNA molecule suitable for the initiation of homologous recombination. The AddA nuclease domain is required for chi fragment generation; this subunit has the helicase and 3' -&gt; 5' nuclease activities. This Bacillus cereus (strain ATCC 14579 / DSM 31 / CCUG 7414 / JCM 2152 / NBRC 15305 / NCIMB 9373 / NCTC 2599 / NRRL B-3711) protein is ATP-dependent helicase/nuclease subunit A.